We begin with the raw amino-acid sequence, 723 residues long: Nuclear hormone receptor HR96 (723 aa).

The segment at residues Pro-4 to Ser-79 is a DNA-binding region (nuclear receptor). 2 NR C4-type zinc fingers span residues Cys-7 to Cys-27 and Cys-43 to Cys-67. Positions Ala-95–Asn-163 are disordered. Polar residues-rich tracts occupy residues Asp-122 to Ser-142 and Ser-151 to Asn-163. An NR LBD domain is found at Glu-483–His-723.

It belongs to the nuclear hormone receptor family. NR1 subfamily.

It is found in the nucleus. In terms of biological role, binds selectively to the HSP27 20E response element. The sequence is that of Nuclear hormone receptor HR96 (Hr96) from Drosophila melanogaster (Fruit fly).